Here is a 275-residue protein sequence, read N- to C-terminus: uncharacterized protein (275 aa).

NAD(+) contacts are provided by residues 20–22 (RAQ), 41–42 (DI), 80–81 (DI), and Asn-107. Ser-160 is a substrate binding site. Tyr-173 (proton acceptor) is an active-site residue. Residues Lys-177 and 206-208 (VDT) each bind NAD(+).

It belongs to the short-chain dehydrogenases/reductases (SDR) family.

This is an uncharacterized protein from Mycobacterium tuberculosis (strain CDC 1551 / Oshkosh).